A 381-amino-acid chain; its full sequence is Homoserine O-succinyltransferase (381 aa).

In terms of domain architecture, AB hydrolase-1 spans 45–360 (NAVLVCHALN…PHGHDAFLLD (316 aa)). The Nucleophile role is filled by S151. R221 is a binding site for substrate. Catalysis depends on residues D321 and H354. A substrate-binding site is contributed by D355.

The protein belongs to the AB hydrolase superfamily. MetX family. Homodimer.

It localises to the cytoplasm. The catalysed reaction is L-homoserine + succinyl-CoA = O-succinyl-L-homoserine + CoA. Its pathway is amino-acid biosynthesis; L-methionine biosynthesis via de novo pathway; O-succinyl-L-homoserine from L-homoserine: step 1/1. Its function is as follows. Transfers a succinyl group from succinyl-CoA to L-homoserine, forming succinyl-L-homoserine. This Burkholderia multivorans (strain ATCC 17616 / 249) protein is Homoserine O-succinyltransferase.